Consider the following 475-residue polypeptide: Sulfate adenylyltransferase subunit 1 (475 aa).

The tr-type G domain maps to 25 to 239 (KSLLRFLTCG…EVLETVEIQR (215 aa)). Residues 34-41 (GSVDDGKS) form a G1 region. Residue 34–41 (GSVDDGKS) coordinates GTP. Residues 92-96 (GITID) form a G2 region. The tract at residues 113-116 (DTPG) is G3. GTP-binding positions include 113-117 (DTPGH) and 168-171 (NKMD). A G4 region spans residues 168-171 (NKMD). The interval 206–208 (SAL) is G5.

This sequence belongs to the TRAFAC class translation factor GTPase superfamily. Classic translation factor GTPase family. CysN/NodQ subfamily. As to quaternary structure, heterodimer composed of CysD, the smaller subunit, and CysN.

The catalysed reaction is sulfate + ATP + H(+) = adenosine 5'-phosphosulfate + diphosphate. The protein operates within sulfur metabolism; hydrogen sulfide biosynthesis; sulfite from sulfate: step 1/3. With CysD forms the ATP sulfurylase (ATPS) that catalyzes the adenylation of sulfate producing adenosine 5'-phosphosulfate (APS) and diphosphate, the first enzymatic step in sulfur assimilation pathway. APS synthesis involves the formation of a high-energy phosphoric-sulfuric acid anhydride bond driven by GTP hydrolysis by CysN coupled to ATP hydrolysis by CysD. In Escherichia coli O139:H28 (strain E24377A / ETEC), this protein is Sulfate adenylyltransferase subunit 1.